Consider the following 66-residue polypeptide: DNA-directed RNA polymerase subunit Rpo10 (66 aa).

The Zn(2+) site is built by cysteine 7, cysteine 10, cysteine 47, and cysteine 48.

This sequence belongs to the archaeal Rpo10/eukaryotic RPB10 RNA polymerase subunit family. As to quaternary structure, part of the RNA polymerase complex. Requires Zn(2+) as cofactor.

It localises to the cytoplasm. It catalyses the reaction RNA(n) + a ribonucleoside 5'-triphosphate = RNA(n+1) + diphosphate. DNA-dependent RNA polymerase (RNAP) catalyzes the transcription of DNA into RNA using the four ribonucleoside triphosphates as substrates. The sequence is that of DNA-directed RNA polymerase subunit Rpo10 from Haloarcula marismortui (strain ATCC 43049 / DSM 3752 / JCM 8966 / VKM B-1809) (Halobacterium marismortui).